Here is a 274-residue protein sequence, read N- to C-terminus: Probable eukaryotic translation initiation factor 3 subunit J (274 aa).

Disordered stretches follow at residues 1–110 (MDSW…KEAM) and 207–245 (KEQQEKTQSKRGAAAPAAKPVSTAAPSKKGGKPTVNVNS). Acidic residues predominate over residues 38–47 (DEEDEDEEEN). Residues 52–73 (QNDSHSVSQKSSSSSQNDQGSN) show a composition bias toward low complexity. Residues 82-110 (IQERNFEKAIKASEAAAKEESLESSKEAM) are compositionally biased toward basic and acidic residues. Positions 219-234 (AAAPAAKPVSTAAPSK) are enriched in low complexity.

This sequence belongs to the eIF-3 subunit J family. In terms of assembly, component of the eukaryotic translation initiation factor 3 (eIF-3) complex. The eIF-3 complex appears to include tif32/eif3a, SPAC25G10.08/eif3b, tif33/eif3c, SPBC4C3.07/eif3f, tif35/eif3g and sum1/eif3i. This set of common subunits may also associate exclusively with either moe1/eif3d and int6/eif3e, or with SPAC821.05/eif3h and SPAC1751.03/eif3m. The eIF-3 complex may also include SPAC3A12.13c/eif3j. Interacts with sad1.

The protein localises to the cytoplasm. Functionally, component of the eukaryotic translation initiation factor 3 (eIF-3) complex, which is involved in protein synthesis of a specialized repertoire of mRNAs and, together with other initiation factors, stimulates binding of mRNA and methionyl-tRNAi to the 40S ribosome. The eIF-3 complex specifically targets and initiates translation of a subset of mRNAs involved in cell proliferation. In Schizosaccharomyces pombe (strain 972 / ATCC 24843) (Fission yeast), this protein is Probable eukaryotic translation initiation factor 3 subunit J.